A 51-amino-acid chain; its full sequence is UPF0391 membrane protein Mbur_2216 (51 aa).

2 consecutive transmembrane segments (helical) span residues 1–21 and 31–51; these read MADL…AYVL and MTIA…TILL.

Belongs to the UPF0391 family.

It is found in the cell membrane. The polypeptide is UPF0391 membrane protein Mbur_2216 (Methanococcoides burtonii (strain DSM 6242 / NBRC 107633 / OCM 468 / ACE-M)).